The following is a 335-amino-acid chain: Glycerol-3-phosphate dehydrogenase [NAD(P)+] (335 aa).

NADPH contacts are provided by F11, R31, and K107. The sn-glycerol 3-phosphate site is built by K107 and G135. A139 contributes to the NADPH binding site. Sn-glycerol 3-phosphate-binding residues include K190, D245, S255, R256, and N257. K190 acts as the Proton acceptor in catalysis. Residue R256 participates in NADPH binding. 2 residues coordinate NADPH: L280 and E282.

This sequence belongs to the NAD-dependent glycerol-3-phosphate dehydrogenase family.

The protein resides in the cytoplasm. The enzyme catalyses sn-glycerol 3-phosphate + NAD(+) = dihydroxyacetone phosphate + NADH + H(+). It carries out the reaction sn-glycerol 3-phosphate + NADP(+) = dihydroxyacetone phosphate + NADPH + H(+). The protein operates within membrane lipid metabolism; glycerophospholipid metabolism. In terms of biological role, catalyzes the reduction of the glycolytic intermediate dihydroxyacetone phosphate (DHAP) to sn-glycerol 3-phosphate (G3P), the key precursor for phospholipid synthesis. In Anaplasma marginale (strain St. Maries), this protein is Glycerol-3-phosphate dehydrogenase [NAD(P)+].